Consider the following 231-residue polypeptide: 7-cyano-7-deazaguanine synthase (231 aa).

ATP is bound at residue 8–18 (FSGGQDSTTCL). Zn(2+) contacts are provided by Cys188, Cys197, Cys200, and Cys203.

The protein belongs to the QueC family. The cofactor is Zn(2+).

The enzyme catalyses 7-carboxy-7-deazaguanine + NH4(+) + ATP = 7-cyano-7-deazaguanine + ADP + phosphate + H2O + H(+). The protein operates within purine metabolism; 7-cyano-7-deazaguanine biosynthesis. Its function is as follows. Catalyzes the ATP-dependent conversion of 7-carboxy-7-deazaguanine (CDG) to 7-cyano-7-deazaguanine (preQ(0)). The protein is 7-cyano-7-deazaguanine synthase of Cronobacter sakazakii (strain ATCC BAA-894) (Enterobacter sakazakii).